The primary structure comprises 194 residues: dTTP/UTP pyrophosphatase (194 aa).

The Proton acceptor role is filled by Asp66.

This sequence belongs to the Maf family. YhdE subfamily. It depends on a divalent metal cation as a cofactor.

The protein resides in the cytoplasm. It carries out the reaction dTTP + H2O = dTMP + diphosphate + H(+). The catalysed reaction is UTP + H2O = UMP + diphosphate + H(+). Its function is as follows. Nucleoside triphosphate pyrophosphatase that hydrolyzes dTTP and UTP. May have a dual role in cell division arrest and in preventing the incorporation of modified nucleotides into cellular nucleic acids. The sequence is that of dTTP/UTP pyrophosphatase from Anaeromyxobacter dehalogenans (strain 2CP-C).